We begin with the raw amino-acid sequence, 160 residues long: NADH-quinone oxidoreductase subunit B (160 aa).

4 residues coordinate [4Fe-4S] cluster: cysteine 37, cysteine 38, cysteine 102, and cysteine 132.

This sequence belongs to the complex I 20 kDa subunit family. In terms of assembly, NDH-1 is composed of 14 different subunits. Subunits NuoB, C, D, E, F, and G constitute the peripheral sector of the complex. The cofactor is [4Fe-4S] cluster.

The protein localises to the cell membrane. It catalyses the reaction a quinone + NADH + 5 H(+)(in) = a quinol + NAD(+) + 4 H(+)(out). Its function is as follows. NDH-1 shuttles electrons from NADH, via FMN and iron-sulfur (Fe-S) centers, to quinones in the respiratory chain. Couples the redox reaction to proton translocation (for every two electrons transferred, four hydrogen ions are translocated across the cytoplasmic membrane), and thus conserves the redox energy in a proton gradient. This Polynucleobacter asymbioticus (strain DSM 18221 / CIP 109841 / QLW-P1DMWA-1) (Polynucleobacter necessarius subsp. asymbioticus) protein is NADH-quinone oxidoreductase subunit B.